The following is a 307-amino-acid chain: UDP-N-acetylenolpyruvoylglucosamine reductase (307 aa).

The FAD-binding PCMH-type domain maps to 33-197 (TGGNADFYIT…LEAAFTLAPG (165 aa)). The active site involves arginine 176. The Proton donor role is filled by serine 226. The active site involves glutamate 296.

This sequence belongs to the MurB family. FAD serves as cofactor.

The protein localises to the cytoplasm. The catalysed reaction is UDP-N-acetyl-alpha-D-muramate + NADP(+) = UDP-N-acetyl-3-O-(1-carboxyvinyl)-alpha-D-glucosamine + NADPH + H(+). It participates in cell wall biogenesis; peptidoglycan biosynthesis. Its function is as follows. Cell wall formation. In Staphylococcus aureus (strain COL), this protein is UDP-N-acetylenolpyruvoylglucosamine reductase.